A 419-amino-acid chain; its full sequence is Fusaric acid cluster transcription factor FUB10 (419 aa).

The zn(2)-C6 fungal-type DNA-binding region spans 16-47 (CDRCRAQKLRCHRDSGHSTDACLRCLKSGIEC). Residues 50-92 (SKARPTGRPPSRQVQPTVVVEQGDTSSSSHTTDSSPSAGGTDM) are disordered. A compositionally biased stretch (low complexity) spans 74-86 (TSSSSHTTDSSPS).

It localises to the nucleus. Functionally, transcription factor that regulates the expression of the gene cluster that mediates the biosynthesis of fusaric acid, a mycotoxin with low to moderate toxicity to animals and humans, but with high phytotoxic properties. In Gibberella fujikuroi (strain CBS 195.34 / IMI 58289 / NRRL A-6831) (Bakanae and foot rot disease fungus), this protein is Fusaric acid cluster transcription factor FUB10.